Consider the following 258-residue polypeptide: uncharacterized protein (258 aa).

A signal peptide spans M1 to G20. C21 carries N-palmitoyl cysteine lipidation. C21 is lipidated: S-diacylglycerol cysteine.

This sequence belongs to the staphylococcal tandem lipoprotein family.

It is found in the cell membrane. This is an uncharacterized protein from Staphylococcus aureus (strain COL).